The chain runs to 337 residues: Anthraniloyl-CoA anthraniloyltransferase (337 aa).

2 residues coordinate anthraniloyl-CoA: threonine 29 and phenylalanine 33. Cysteine 113 functions as the Acyl-thioester intermediate in the catalytic mechanism. Anthraniloyl-CoA contacts are provided by residues arginine 154 to asparagine 155, methionine 221 to arginine 224, and histidine 258.

It belongs to the thiolase-like superfamily. FabH family. Homodimer.

Its subcellular location is the cytoplasm. It catalyses the reaction anthraniloyl-CoA + malonyl-CoA + H(+) = (2-aminobenzoyl)acetyl-CoA + CO2 + CoA. Required for the biosynthesis of a number of signaling molecules, such as the quinolone signal 2-heptyl-3-hydroxy-4(1H)-quinolone (PQS), 2-heptyl-4-hydroxyquinoline (HHQ) and 2,4-dihydroxyquinoline (DHQ). These molecules are required for normal biofilm formation. Catalyzes the transfer of the anthraniloyl moiety from anthraniloyl-CoA to malonyl-CoA to form 2-aminobenzoylacetyl-CoA. The first step of the reaction is the formation of a covalent anthraniloyl-PqsD intermediate. Next, the short-lived intermediate 3-(2-aminophenyl)-3-oxopropanoyl-CoA is formed. An intramolecular rearrangement of this intermediate can give rise to 2,4-dihydroxyquinoline (DHQ). In Pseudomonas aeruginosa (strain ATCC 15692 / DSM 22644 / CIP 104116 / JCM 14847 / LMG 12228 / 1C / PRS 101 / PAO1), this protein is Anthraniloyl-CoA anthraniloyltransferase (pqsD).